The following is a 163-amino-acid chain: MKKIRIGQGFDIHPLVVGRDLIIGGVTIPYEKGLLGHSDADVLLHALCDALLGAAALGDIGRHFSDTDARYQGIDSRKLVREVHRLLTEAGYRVVNIDATIIAQVPKMAPHIPGMVTNIAQDLTLPAGDINIKAKTAEKLGVVGRGEGIVAEVVCLIADGDEV.

Residues Asp11 and His13 each coordinate a divalent metal cation. Residues 11–13 and 37–38 contribute to the 4-CDP-2-C-methyl-D-erythritol 2-phosphate site; these read DIH and HS. His45 serves as a coordination point for a divalent metal cation. 4-CDP-2-C-methyl-D-erythritol 2-phosphate-binding positions include 59–61, 64–68, 103–109, and Arg145; these read DIG, FSDTD, and AQVPKMA.

Belongs to the IspF family. As to quaternary structure, homotrimer. Requires a divalent metal cation as cofactor.

The enzyme catalyses 4-CDP-2-C-methyl-D-erythritol 2-phosphate = 2-C-methyl-D-erythritol 2,4-cyclic diphosphate + CMP. The protein operates within isoprenoid biosynthesis; isopentenyl diphosphate biosynthesis via DXP pathway; isopentenyl diphosphate from 1-deoxy-D-xylulose 5-phosphate: step 4/6. Functionally, involved in the biosynthesis of isopentenyl diphosphate (IPP) and dimethylallyl diphosphate (DMAPP), two major building blocks of isoprenoid compounds. Catalyzes the conversion of 4-diphosphocytidyl-2-C-methyl-D-erythritol 2-phosphate (CDP-ME2P) to 2-C-methyl-D-erythritol 2,4-cyclodiphosphate (ME-CPP) with a corresponding release of cytidine 5-monophosphate (CMP). In Nitrosomonas europaea (strain ATCC 19718 / CIP 103999 / KCTC 2705 / NBRC 14298), this protein is 2-C-methyl-D-erythritol 2,4-cyclodiphosphate synthase.